The primary structure comprises 351 residues: Formyl peptide receptor-related sequence 1 (351 aa).

The Extracellular portion of the chain corresponds to 1-27; that stretch reads METNYSIPLNGSDVVIYDSTISRVLWI. 2 N-linked (GlcNAc...) asparagine glycosylation sites follow: N4 and N10. The chain crosses the membrane as a helical span at residues 28–50; that stretch reads LSMVVVSITFFLGVLGNGLVIWV. The Cytoplasmic portion of the chain corresponds to 51-61; sequence AGFRMPHTVTT. The chain crosses the membrane as a helical span at residues 62–83; sequence IWYLNLALADFSFTATLPFLLV. Residues 84-100 are Extracellular-facing; that stretch reads EMAMKEKWPFGWFLCKL. An intrachain disulfide couples C98 to C176. A helical membrane pass occupies residues 101–121; the sequence is VHIAVDVNLFGSVFLIAVIAL. Over 122–140 the chain is Cytoplasmic; the sequence is DRCICVLHPVWAQNHRTVS. A helical membrane pass occupies residues 141 to 162; sequence LARNVVVGSWIFALILTLPLFL. At 163 to 205 the chain is on the extracellular side; it reads FLTTVRDARGDVHCRLSFVSWGNSVEERLNTAITFVTTRGIIR. Residues 206-226 traverse the membrane as a helical segment; the sequence is FIVSFSLPMSFVAICYGLITT. At 227-242 the chain is on the cytoplasmic side; that stretch reads KIHKKAFVNSSRPFRV. Residues 243–266 traverse the membrane as a helical segment; the sequence is LTGVVASFFICWFPFQLVALLGTV. At 267–286 the chain is on the extracellular side; sequence WLKEMQFSGSYKIIGRLVNP. Residues 287–306 traverse the membrane as a helical segment; it reads TSSLAFFNSCLNPILYVFMG. Residues 307–351 are Cytoplasmic-facing; that stretch reads QDFQERLIHSLSSRLQRALSEDSGHISDTRTNLASLPEDIEIKAI.

Belongs to the G-protein coupled receptor 1 family. Expressed exclusively in vomeronasal neurons. Expressed in 0.6 % of a subset of sensory neurons located in the basal layer of the vomeronasal organ. Each neuron appears to express only one receptor gene. Expressed mostly in neutrophils, followed by spleen and lung and expressed at very low levels in heart and liver.

It localises to the cell membrane. Its function is as follows. Low affinity receptor for N-formyl-methionyl peptides. Receptor for lipoxin A4. May have an olfactory function associated with the identification of pathogens or of pathogenic states. The polypeptide is Formyl peptide receptor-related sequence 1 (Fpr-s1) (Mus musculus (Mouse)).